The primary structure comprises 614 residues: Nuclear receptor subfamily 1 group D member 1 (614 aa).

The span at 1–12 (MTTLDSNNNTGG) shows a compositional bias: polar residues. Positions 1 to 70 (MTTLDSNNNT…TQDPARSFGS (70 aa)) are required for phosphorylation by CSNK1E and cytoplasmic localization. The segment at 1 to 119 (MTTLDSNNNT…SSRVSPSKST (119 aa)) is disordered. The modulating stretch occupies residues 1–128 (MTTLDSNNNT…TSNITKLNGM (128 aa)). Residues 14–34 (ITYIGSSGSSPSRTSPESLYS) are compositionally biased toward low complexity. Polar residues predominate over residues 35 to 48 (DNSNGSFQSLTQGC). The segment at 49–284 (PTYFPPSPTG…PPRSPSPEPT (236 aa)) is crucial for activation of GJA1. Phosphoserine; by GSK3-beta is present on residues Ser-55 and Ser-59. Low complexity predominate over residues 69-102 (GSIPPSLSDDGSPSSSSSSSSSSSSFYNGSPPGS). Residues 129–205 (VLLCKVCGDV…VGMSRDAVRF (77 aa)) constitute a DNA-binding region (nuclear receptor). NR C4-type zinc fingers lie at residues 132–152 (CKVC…CEGC) and 169–193 (CLKN…FKKC). An N6-acetyllysine; by KAT5 mark is found at Lys-191 and Lys-192. Polar residues predominate over residues 233-243 (SQCPLETSPTQ). Disordered stretches follow at residues 233-285 (SQCP…EPTV) and 311-345 (PGNF…DNNT). Pro residues predominate over residues 244–261 (HPTPGPMGPSPPPAPVPS). Thr-274 is modified (phosphothreonine; by CDK1). The NR LBD domain occupies 284 to 614 (TVEDVISQVA…KLLSFRVDAQ (331 aa)). Positions 311–324 (PGNFNANHASGSPP) are enriched in polar residues. Lys-400 bears the N6-acetyllysine mark. A heme-binding site is contributed by Cys-418. N6-acetyllysine is present on Lys-591. His-602 provides a ligand contact to heme.

The protein belongs to the nuclear hormone receptor family. NR1 subfamily. In terms of assembly, binds DNA as a monomer or a homodimer. Interacts with C1D, NR2E3 and SP1. Interacts with OPHN1 (via C-terminus). Interacts with ZNHIT1. Interacts with PER2; the interaction associates PER2 to BMAL1 promoter region. Interacts with CRY1. Interacts with CCAR2. Interacts with SIAH2. Interacts with CDK1. Interacts with FBXW7. Interacts with HUWE1. Interacts with NR0B2. Interacts with NFIL3. Interacts (via domain NR LBD) with HSP90AA1 and HSP90AB1. In terms of processing, ubiquitinated, leading to its proteasomal degradation. Ubiquitinated by SIAH2; leading to its proteasomal degradation. Ubiquitinated by the SCF(FBXW7) complex when phosphorylated by CDK1 leading to its proteasomal degradation. Rapidly ubiquitinated in response to inflammatory triggers and sumoylation is a prerequisite to its ubiquitination. Post-translationally, sumoylated by UBE2I, desumoylated by SENP1, and sumoylation is a prerequisite to its ubiquitination. Phosphorylated by CSNK1E; phosphorylation enhances its cytoplasmic localization. In terms of processing, undergoes lysosome-mediated degradation in a time-dependent manner in the liver. Widely expressed. Expressed at high levels in the liver, adipose tissue, skeletal muscle and brain. Also expressed in endothelial cells (ECs), vascular smooth muscle cells (VSMCs) and macrophages. Expression oscillates diurnally in the suprachiasmatic nucleus (SCN) of the hypothalamus as well as in peripheral tissues. Expression increases during the differentiation of pre-adipocytes into mature adipocytes. Expressed at high levels in some squamous carcinoma cell lines.

It localises to the nucleus. Its subcellular location is the cytoplasm. It is found in the cell projection. The protein resides in the dendrite. The protein localises to the dendritic spine. Transcriptional repressor which coordinates circadian rhythm and metabolic pathways in a heme-dependent manner. Integral component of the complex transcription machinery that governs circadian rhythmicity and forms a critical negative limb of the circadian clock by directly repressing the expression of core clock components BMAL1, CLOCK and CRY1. Also regulates genes involved in metabolic functions, including lipid and bile acid metabolism, adipogenesis, gluconeogenesis and the macrophage inflammatory response. Acts as a receptor for heme which stimulates its interaction with the NCOR1/HDAC3 corepressor complex, enhancing transcriptional repression. Recognizes two classes of DNA response elements within the promoter of its target genes and can bind to DNA as either monomers or homodimers, depending on the nature of the response element. Binds as a monomer to a response element composed of the consensus half-site motif 5'-[A/G]GGTCA-3' preceded by an A/T-rich 5' sequence (RevRE), or as a homodimer to a direct repeat of the core motif spaced by two nucleotides (RevDR-2). Acts as a potent competitive repressor of ROR alpha (RORA) function and regulates the levels of its ligand heme by repressing the expression of PPARGC1A, a potent inducer of heme synthesis. Regulates lipid metabolism by repressing the expression of APOC3 and by influencing the activity of sterol response element binding proteins (SREBPs); represses INSIG2 which interferes with the proteolytic activation of SREBPs which in turn govern the rhythmic expression of enzymes with key functions in sterol and fatty acid synthesis. Regulates gluconeogenesis via repression of G6PC1 and PEPCK and adipocyte differentiation via repression of PPARG. Regulates glucagon release in pancreatic alpha-cells via the AMPK-NAMPT-SIRT1 pathway and the proliferation, glucose-induced insulin secretion and expression of key lipogenic genes in pancreatic-beta cells. Positively regulates bile acid synthesis by increasing hepatic expression of CYP7A1 via repression of NR0B2 and NFIL3 which are negative regulators of CYP7A1. Modulates skeletal muscle oxidative capacity by regulating mitochondrial biogenesis and autophagy; controls mitochondrial biogenesis and respiration by interfering with the STK11-PRKAA1/2-SIRT1-PPARGC1A signaling pathway. Represses the expression of SERPINE1/PAI1, an important modulator of cardiovascular disease and the expression of inflammatory cytokines and chemokines in macrophages. Represses gene expression at a distance in macrophages by inhibiting the transcription of enhancer-derived RNAs (eRNAs). Plays a role in the circadian regulation of body temperature and negatively regulates thermogenic transcriptional programs in brown adipose tissue (BAT); imposes a circadian oscillation in BAT activity, increasing body temperature when awake and depressing thermogenesis during sleep. In concert with NR2E3, regulates transcriptional networks critical for photoreceptor development and function. In addition to its activity as a repressor, can also act as a transcriptional activator. In the ovarian granulosa cells acts as a transcriptional activator of STAR which plays a role in steroid biosynthesis. In collaboration with SP1, activates GJA1 transcription in a heme-independent manner. Represses the transcription of CYP2B10, CYP4A10 and CYP4A14. Represses the transcription of CES2. Represses and regulates the circadian expression of TSHB in a NCOR1-dependent manner. Negatively regulates the protein stability of NR3C1 and influences the time-dependent subcellular distribution of NR3C1, thereby affecting its transcriptional regulatory activity. Plays a critical role in the circadian control of neutrophilic inflammation in the lung; under resting, non-stress conditions, acts as a rhythmic repressor to limit inflammatory activity whereas in the presence of inflammatory triggers undergoes ubiquitin-mediated degradation thereby relieving inhibition of the inflammatory response. Plays a key role in the circadian regulation of microglial activation and neuroinflammation; suppresses microglial activation through the NF-kappaB pathway in the central nervous system. Plays a role in the regulation of the diurnal rhythms of lipid and protein metabolism in the skeletal muscle via transcriptional repression of genes controlling lipid and amino acid metabolism in the muscle. The protein is Nuclear receptor subfamily 1 group D member 1 (NR1D1) of Homo sapiens (Human).